Here is a 64-residue protein sequence, read N- to C-terminus: Large ribosomal subunit protein uL30 (64 aa).

The protein belongs to the universal ribosomal protein uL30 family. As to quaternary structure, part of the 50S ribosomal subunit.

This is Large ribosomal subunit protein uL30 from Syntrophus aciditrophicus (strain SB).